Reading from the N-terminus, the 1226-residue chain is Methionine synthase (1226 aa).

One can recognise a Hcy-binding domain in the interval 7–327 (KVQIEKQLSE…EHIRQMALVV (321 aa)). Zn(2+)-binding residues include Cys-249, Cys-312, and Cys-313. In terms of domain architecture, Pterin-binding spans 358-619 (FINVGERTNV…VPEDLREAVE (262 aa)). Residues 652-746 (SALEWRDWPV…FINASKEVGA (95 aa)) enclose the B12-binding N-terminal domain. Residues Glu-696, 758–762 (GDVHD), His-761, Ser-806, Thr-810, and Ala-862 contribute to the methylcob(III)alamin site. One can recognise a B12-binding domain in the interval 748–883 (NGKILLATVK…SNELKPSFVE (136 aa)). The AdoMet activation domain occupies 899-1226 (KQPRTKPVTL…AEKWLGPNLN (328 aa)). S-adenosyl-L-methionine contacts are provided by residues Asp-949, Arg-1137, and 1192 to 1193 (YF).

This sequence belongs to the vitamin-B12 dependent methionine synthase family. Methylcob(III)alamin is required as a cofactor. The cofactor is Zn(2+).

It carries out the reaction (6S)-5-methyl-5,6,7,8-tetrahydrofolate + L-homocysteine = (6S)-5,6,7,8-tetrahydrofolate + L-methionine. It participates in amino-acid biosynthesis; L-methionine biosynthesis via de novo pathway; L-methionine from L-homocysteine (MetH route): step 1/1. In terms of biological role, catalyzes the transfer of a methyl group from methyl-cobalamin to homocysteine, yielding enzyme-bound cob(I)alamin and methionine. Subsequently, remethylates the cofactor using methyltetrahydrofolate. The chain is Methionine synthase (metH) from Aliivibrio fischeri (Vibrio fischeri).